We begin with the raw amino-acid sequence, 172 residues long: CD164 sialomucin-like 2 protein (172 aa).

Residues 1–29 form the signal peptide; sequence MAAPGPRALRAALCGGCCCLLLCAQLVLA. At 30-137 the chain is on the extracellular side; the sequence is GKGARGFGRG…PEDHSPGFDG (108 aa). N-linked (GlcNAc...) asparagine glycans are attached at residues Asn-69 and Asn-101. The interval 108–132 is disordered; sequence ASHHHSTEEPKPSTTGSPPIPEDHS. Residues 138 to 158 traverse the membrane as a helical segment; the sequence is ASFIGGIVLVLSLQATAFFVL. The Cytoplasmic segment spans residues 159 to 172; that stretch reads RFLKAKDSTYQTLI.

Belongs to the CD164 family.

It localises to the membrane. This is CD164 sialomucin-like 2 protein (Cd164l2) from Mus musculus (Mouse).